The sequence spans 387 residues: Alkanesulfonate monooxygenase (387 aa).

The protein belongs to the SsuD family.

It catalyses the reaction an alkanesulfonate + FMNH2 + O2 = an aldehyde + FMN + sulfite + H2O + 2 H(+). Its function is as follows. Catalyzes the desulfonation of aliphatic sulfonates. The protein is Alkanesulfonate monooxygenase of Xanthomonas axonopodis pv. citri (strain 306).